We begin with the raw amino-acid sequence, 431 residues long: Phosphoribosylamine--glycine ligase (431 aa).

An ATP-grasp domain is found at 108-315; it reads KDFLARHEIP…LVLLVEAAFA (208 aa). 134–195 is an ATP binding site; that stretch reads LQEKGAPIVI…EEFLDGEEAS (62 aa). Glutamate 285 and asparagine 287 together coordinate Mg(2+).

The protein belongs to the GARS family. It depends on Mg(2+) as a cofactor. The cofactor is Mn(2+).

It catalyses the reaction 5-phospho-beta-D-ribosylamine + glycine + ATP = N(1)-(5-phospho-beta-D-ribosyl)glycinamide + ADP + phosphate + H(+). Its pathway is purine metabolism; IMP biosynthesis via de novo pathway; N(1)-(5-phospho-D-ribosyl)glycinamide from 5-phospho-alpha-D-ribose 1-diphosphate: step 2/2. The sequence is that of Phosphoribosylamine--glycine ligase from Pseudomonas putida (strain ATCC 47054 / DSM 6125 / CFBP 8728 / NCIMB 11950 / KT2440).